Consider the following 586-residue polypeptide: Thioredoxin domain-containing protein 3 (586 aa).

The 107-residue stretch at 10-116 (LQSVVNSQNL…NRKVITLIDE (107 aa)) folds into the Thioredoxin domain. Cys39 and Cys42 are oxidised to a cystine. 3 NDK regions span residues 157 to 254 (MAII…VLEE), 312 to 452 (VQTT…STLA), and 453 to 586 (LIKP…NPEN).

In the C-terminal section; belongs to the NDK family. As to quaternary structure, monomer. As to expression, testis-specific. Expressed mainly in round spermatids.

It is found in the cytoplasm. Functionally, probably required during the final stages of sperm tail maturation in the testis and/or epididymis, where extensive disulfide bonding of fibrous sheath (FS) proteins occurs. In vitro, it has neither nucleoside diphosphate kinase (NDPK) activity nor reducing activity on disulfide bonds. Exhibits a 3'-5' exonuclease activity with a preference for single-stranded DNA, suggesting roles in DNA proofreading and repair. This Mus musculus (Mouse) protein is Thioredoxin domain-containing protein 3 (Nme8).